Reading from the N-terminus, the 892-residue chain is Alpha-actinin-1 (892 aa).

M1 carries the N-acetylmethionine modification. The segment at 1 to 247 is actin-binding; the sequence is MDHYDSQQTN…IMTYVSSFYH (247 aa). S6 bears the Phosphoserine mark. Y12 carries the phosphotyrosine; by FAK1 modification. Calponin-homology (CH) domains are found at residues 31–135 and 144–250; these read KQQR…LRFA and TSAK…HAFS. Residues K95 and K195 each carry the N6-acetyllysine modification. Spectrin repeat units follow at residues 274–384, 394–499, 509–620, and 630–733; these read QLME…WLLN, HLAE…ALER, QLYL…ALTE, and RLRK…EVEN. Positions 274–733 are interaction with DDN; the sequence is QLMEDYEKLA…IARTINEVEN (460 aa). S471 bears the Phosphoserine mark. K676 bears the N6-acetyllysine mark. S677 is modified (phosphoserine). 2 EF-hand domains span residues 746–781 and 787–822; these read EQMNEFRASFNHFDRDHSGTLGPEEFKACLISLGYD and QGEAEFARIMSIVDPNRLGVVTFQAFIDFMSRETAD. 5 residues coordinate Ca(2+): D759, D761, S763, T765, and E770. At S890 the chain carries Phosphoserine.

The protein belongs to the alpha-actinin family. In terms of assembly, homodimer; antiparallel. Interacts with MYOZ2, TTID and LPP. Interacts with DDN. Interacts with PSD. Interacts with MICALL2. Interacts with DNM2 and CTTN. Interacts with PDLIM1. Interacts with PDLIM2. Interacts with PDLIM4 (via PDZ domain). Interacts with IGSF8.

The protein resides in the cytoplasm. It is found in the cytoskeleton. The protein localises to the myofibril. It localises to the sarcomere. Its subcellular location is the z line. The protein resides in the cell membrane. It is found in the cell junction. The protein localises to the cell projection. It localises to the ruffle. Its function is as follows. F-actin cross-linking protein which is thought to anchor actin to a variety of intracellular structures. Association with IGSF8 regulates the immune synapse formation and is required for efficient T-cell activation. The sequence is that of Alpha-actinin-1 (Actn1) from Rattus norvegicus (Rat).